A 382-amino-acid polypeptide reads, in one-letter code: Succinate--CoA ligase [ADP-forming] subunit beta 1 (382 aa).

Residues 9 to 235 (KQIFAKHGIR…ATEEDPLERE (227 aa)) enclose the ATP-grasp domain. ATP contacts are provided by residues Lys-45, 52-54 (GRG), Glu-91, Leu-94, and Glu-99. 2 residues coordinate Mg(2+): Asn-191 and Asp-204. Asn-255 contributes to the substrate binding site.

This sequence belongs to the succinate/malate CoA ligase beta subunit family. In terms of assembly, heterotetramer of two alpha and two beta subunits. It depends on Mg(2+) as a cofactor.

The catalysed reaction is succinate + ATP + CoA = succinyl-CoA + ADP + phosphate. It catalyses the reaction GTP + succinate + CoA = succinyl-CoA + GDP + phosphate. Its pathway is carbohydrate metabolism; tricarboxylic acid cycle; succinate from succinyl-CoA (ligase route): step 1/1. Functionally, succinyl-CoA synthetase functions in the citric acid cycle (TCA), coupling the hydrolysis of succinyl-CoA to the synthesis of either ATP or GTP and thus represents the only step of substrate-level phosphorylation in the TCA. The beta subunit provides nucleotide specificity of the enzyme and binds the substrate succinate, while the binding sites for coenzyme A and phosphate are found in the alpha subunit. This Archaeoglobus fulgidus (strain ATCC 49558 / DSM 4304 / JCM 9628 / NBRC 100126 / VC-16) protein is Succinate--CoA ligase [ADP-forming] subunit beta 1.